Reading from the N-terminus, the 422-residue chain is Protein arginine methyltransferase NDUFAF7, mitochondrial (422 aa).

The N-terminal 28 residues, 1-28, are a transit peptide targeting the mitochondrion; sequence MRTLLRLKRLMPEVLWTKRSCSSSSINK.

It belongs to the NDUFAF7 family.

The protein resides in the mitochondrion. It catalyses the reaction L-arginyl-[protein] + 2 S-adenosyl-L-methionine = N(omega),N(omega)'-dimethyl-L-arginyl-[protein] + 2 S-adenosyl-L-homocysteine + 2 H(+). Arginine methyltransferase involved in the assembly or stability of mitochondrial NADH:ubiquinone oxidoreductase complex (complex I). Acts by mediating symmetric dimethylation of 'Arg-118' of ndufs2 after it assembles into the complex I, stabilizing the early intermediate complex. The chain is Protein arginine methyltransferase NDUFAF7, mitochondrial from Danio rerio (Zebrafish).